Here is a 191-residue protein sequence, read N- to C-terminus: MVDTSNVKLRIENIVASVDLFAQLDLEKVLDICPNSKYNPEEFPGIICRFDDPKVALLIFSSGKLVVTGAKSIQDIERAVAKLIQKLKGIGVKFKRAPLIDVQNMVFSGDIGREFNLDNVALTLPNCEYEPEQFPGVIYRVKEPRAVILLFSSGKIVCSGAKSEADAWEAVRKLLRELEKYGLIEEEEEEL.

Tandem repeats lie at residues 11-87 and 102-178.

This sequence belongs to the TBP family.

General factor that plays a role in the activation of archaeal genes transcribed by RNA polymerase. Binds specifically to the TATA box promoter element which lies close to the position of transcription initiation. In Pyrococcus horikoshii (strain ATCC 700860 / DSM 12428 / JCM 9974 / NBRC 100139 / OT-3), this protein is TATA-box-binding protein (tbp).